Consider the following 335-residue polypeptide: Putative type I specificity subunit S.MpnORF89P (335 aa).

Belongs to the type-I restriction system S methylase family. The methyltransferase is composed of M and S polypeptides.

Its function is as follows. The specificity (S) subunit of a type I methyltransferase (MTase); this subunit dictates DNA sequence specificity. The single R subunit has multiple frameshifts and is probably not expressed. In Mycoplasma pneumoniae (strain ATCC 29342 / M129 / Subtype 1) (Mycoplasmoides pneumoniae), this protein is Putative type I specificity subunit S.MpnORF89P.